The primary structure comprises 73 residues: Large ribosomal subunit protein bL31 (73 aa).

The protein belongs to the bacterial ribosomal protein bL31 family. Type A subfamily. Part of the 50S ribosomal subunit.

Functionally, binds the 23S rRNA. This is Large ribosomal subunit protein bL31 (rpmE) from Roseobacter denitrificans (strain ATCC 33942 / OCh 114) (Erythrobacter sp. (strain OCh 114)).